Consider the following 203-residue polypeptide: Recombination protein RecR (203 aa).

The C4-type zinc-finger motif lies at 57 to 72 (CARCNTFSETELCVLC). One can recognise a Toprim domain in the interval 80-175 (DVLCVVEMPA…SVSRIARGLP (96 aa)).

The protein belongs to the RecR family.

Its function is as follows. May play a role in DNA repair. It seems to be involved in an RecBC-independent recombinational process of DNA repair. It may act with RecF and RecO. The sequence is that of Recombination protein RecR from Laribacter hongkongensis (strain HLHK9).